Consider the following 86-residue polypeptide: Co-chaperonin GroES (86 aa).

The protein belongs to the GroES chaperonin family. As to quaternary structure, heptamer of 7 subunits arranged in a ring. Interacts with the chaperonin GroEL.

It is found in the cytoplasm. Its function is as follows. Together with the chaperonin GroEL, plays an essential role in assisting protein folding. The GroEL-GroES system forms a nano-cage that allows encapsulation of the non-native substrate proteins and provides a physical environment optimized to promote and accelerate protein folding. GroES binds to the apical surface of the GroEL ring, thereby capping the opening of the GroEL channel. The protein is Co-chaperonin GroES of Campylobacter jejuni subsp. jejuni serotype O:6 (strain 81116 / NCTC 11828).